The primary structure comprises 157 residues: Putative 4-hydroxy-4-methyl-2-oxoglutarate aldolase (157 aa).

Substrate contacts are provided by residues 78–81 (GDVI) and Arg-100. Asp-101 is an a divalent metal cation binding site.

It belongs to the class II aldolase/RraA-like family. As to quaternary structure, homotrimer. A divalent metal cation serves as cofactor.

It carries out the reaction 4-hydroxy-4-methyl-2-oxoglutarate = 2 pyruvate. It catalyses the reaction oxaloacetate + H(+) = pyruvate + CO2. Functionally, catalyzes the aldol cleavage of 4-hydroxy-4-methyl-2-oxoglutarate (HMG) into 2 molecules of pyruvate. Also contains a secondary oxaloacetate (OAA) decarboxylase activity due to the common pyruvate enolate transition state formed following C-C bond cleavage in the retro-aldol and decarboxylation reactions. The chain is Putative 4-hydroxy-4-methyl-2-oxoglutarate aldolase from Mycobacterium leprae (strain Br4923).